The primary structure comprises 85 residues: Large ribosomal subunit protein bL27 (85 aa).

The interval 1–22 is disordered; it reads MAHKKAGGSTRNGRDSESKRLG.

This sequence belongs to the bacterial ribosomal protein bL27 family.

This is Large ribosomal subunit protein bL27 from Marinomonas sp. (strain MWYL1).